The chain runs to 176 residues: RNA pyrophosphohydrolase (176 aa).

Positions 6-149 constitute a Nudix hydrolase domain; it reads GYRPNVGIII…KRNVYEMALT (144 aa). The Nudix box signature appears at 38–59; it reads GGIKPGESPEAAMYRELMEEVG.

The protein belongs to the Nudix hydrolase family. RppH subfamily. The cofactor is a divalent metal cation.

Its function is as follows. Accelerates the degradation of transcripts by removing pyrophosphate from the 5'-end of triphosphorylated RNA, leading to a more labile monophosphorylated state that can stimulate subsequent ribonuclease cleavage. In Laribacter hongkongensis (strain HLHK9), this protein is RNA pyrophosphohydrolase.